The primary structure comprises 573 residues: Proline--tRNA ligase (573 aa).

It belongs to the class-II aminoacyl-tRNA synthetase family. ProS type 1 subfamily. As to quaternary structure, homodimer.

The protein resides in the cytoplasm. It carries out the reaction tRNA(Pro) + L-proline + ATP = L-prolyl-tRNA(Pro) + AMP + diphosphate. In terms of biological role, catalyzes the attachment of proline to tRNA(Pro) in a two-step reaction: proline is first activated by ATP to form Pro-AMP and then transferred to the acceptor end of tRNA(Pro). As ProRS can inadvertently accommodate and process non-cognate amino acids such as alanine and cysteine, to avoid such errors it has two additional distinct editing activities against alanine. One activity is designated as 'pretransfer' editing and involves the tRNA(Pro)-independent hydrolysis of activated Ala-AMP. The other activity is designated 'posttransfer' editing and involves deacylation of mischarged Ala-tRNA(Pro). The misacylated Cys-tRNA(Pro) is not edited by ProRS. The chain is Proline--tRNA ligase from Cupriavidus taiwanensis (strain DSM 17343 / BCRC 17206 / CCUG 44338 / CIP 107171 / LMG 19424 / R1) (Ralstonia taiwanensis (strain LMG 19424)).